Reading from the N-terminus, the 139-residue chain is D-ribose pyranase (139 aa).

His20 (proton donor) is an active-site residue. Substrate contacts are provided by residues Asp28, His106, and 128-130 (YAN).

Belongs to the RbsD / FucU family. RbsD subfamily. As to quaternary structure, homodecamer.

It is found in the cytoplasm. The enzyme catalyses beta-D-ribopyranose = beta-D-ribofuranose. Its pathway is carbohydrate metabolism; D-ribose degradation; D-ribose 5-phosphate from beta-D-ribopyranose: step 1/2. Its function is as follows. Catalyzes the interconversion of beta-pyran and beta-furan forms of D-ribose. The sequence is that of D-ribose pyranase from Pectobacterium atrosepticum (strain SCRI 1043 / ATCC BAA-672) (Erwinia carotovora subsp. atroseptica).